Here is a 469-residue protein sequence, read N- to C-terminus: Adenosylhomocysteinase (469 aa).

Positions 63, 139, and 164 each coordinate substrate. Residue 165 to 167 (TTT) participates in NAD(+) binding. Substrate is bound by residues Lys194 and Asp198. NAD(+)-binding positions include Asn199, 228–233 (GYGDVG), Glu251, Asn300, 321–323 (IGH), and Asn375.

It belongs to the adenosylhomocysteinase family. It depends on NAD(+) as a cofactor.

The protein localises to the cytoplasm. It catalyses the reaction S-adenosyl-L-homocysteine + H2O = L-homocysteine + adenosine. It participates in amino-acid biosynthesis; L-homocysteine biosynthesis; L-homocysteine from S-adenosyl-L-homocysteine: step 1/1. Functionally, may play a key role in the regulation of the intracellular concentration of adenosylhomocysteine. This Pseudomonas fluorescens (strain ATCC BAA-477 / NRRL B-23932 / Pf-5) protein is Adenosylhomocysteinase.